The sequence spans 242 residues: UPF0309 protein BMEA_B0892 (242 aa).

In terms of domain architecture, SIS spans 30 to 214 (AADLIAAAAR…ARLVGEGDAP (185 aa)).

Belongs to the UPF0309 family.

This is UPF0309 protein BMEA_B0892 from Brucella melitensis biotype 2 (strain ATCC 23457).